Consider the following 57-residue polypeptide: Potassium channel toxin alpha-KTx 8.2 (57 aa).

The N-terminal stretch at 1-28 is a signal peptide; sequence MSRLYAIILIALVFNVVMTITPDMKVEA. Cystine bridges form between Cys-31/Cys-47, Cys-34/Cys-52, and Cys-38/Cys-54.

This sequence belongs to the short scorpion toxin superfamily. Potassium channel inhibitor family. Alpha-KTx 08 subfamily. In terms of tissue distribution, expressed by the venom gland.

The protein localises to the secreted. Functionally, this toxin inhibits rKv1.1/KCNA1 (100% inhibition at 3 uM), Kv1.3/KCNA3 (human, mouse and rat) (IC(50)=269-467 nM), shaker IR (60% at 3 uM) and activates the mouse capsaicin receptor TRPV1 (EC(50)=132 uM, at 20 degrees Celsius), a non-selective cation channel expressed by sensory neurons of the pain pathway. In vivo, intraplantar injection of this toxin in WT mice hind paw shows significant acute pain, whereas no pain is observed when the toxin is injected into TRPV1 KO mice. In addition, subcutaneous injection into mice (185 mg) produces an excitation of the animal, but no lethality, whereas injection into cockroaches does not provoke lethality as well. In Olivierus martensii (Manchurian scorpion), this protein is Potassium channel toxin alpha-KTx 8.2.